A 690-amino-acid chain; its full sequence is Elongation factor G (690 aa).

Positions 8–283 (EDYRNFGIMA…AVVDYLPSPV (276 aa)) constitute a tr-type G domain. Residues 17–24 (AHIDAGKT), 81–85 (DTPGH), and 135–138 (NKMD) each bind GTP.

It belongs to the TRAFAC class translation factor GTPase superfamily. Classic translation factor GTPase family. EF-G/EF-2 subfamily.

Its subcellular location is the cytoplasm. Functionally, catalyzes the GTP-dependent ribosomal translocation step during translation elongation. During this step, the ribosome changes from the pre-translocational (PRE) to the post-translocational (POST) state as the newly formed A-site-bound peptidyl-tRNA and P-site-bound deacylated tRNA move to the P and E sites, respectively. Catalyzes the coordinated movement of the two tRNA molecules, the mRNA and conformational changes in the ribosome. The polypeptide is Elongation factor G (Rhodopseudomonas palustris (strain HaA2)).